The sequence spans 1185 residues: Zinc finger SWIM domain-containing protein 5 (1185 aa).

Positions 1–10 are enriched in basic and acidic residues; it reads MADGGEREEL. Disordered regions lie at residues 1-45 and 123-153; these read MADG…GGAG and AGAA…GSAP. The SWIM-type zinc finger occupies 219–256; sequence YKVAISFDRCKITSVTCGCGNKDIFYCAHVVALSLYRI.

In Homo sapiens (Human), this protein is Zinc finger SWIM domain-containing protein 5 (ZSWIM5).